Here is a 551-residue protein sequence, read N- to C-terminus: HTH-type transcriptional regulator SgrR (551 aa).

One can recognise an HTH marR-type domain in the interval 1-116 (MPSARLQQQF…LVSHLGRSFR (116 aa)). Residues 26–49 (LNELAALLSCSRRHMRTLLNTMQD) constitute a DNA-binding region (H-T-H motif). The segment at 163–492 (ELEADIAHHW…IDWQADAARW (330 aa)) is solute-binding.

In terms of biological role, activates the small RNA gene sgrS under glucose-phosphate stress conditions as well as yfdZ. Represses its own transcription under both stress and non-stress conditions. Might act as a sensor of the intracellular accumulation of phosphoglucose by binding these molecules in its C-terminal solute-binding domain. In Shigella boydii serotype 4 (strain Sb227), this protein is HTH-type transcriptional regulator SgrR.